We begin with the raw amino-acid sequence, 575 residues long: Glutathione hydrolase proenzyme (575 aa).

Residues 1 to 24 form the signal peptide; that stretch reads MKNQTFSKALLATALSCALFNVHA. Arg-100 is an L-glutamate binding site. Thr-376 acts as the Nucleophile in catalysis. L-glutamate contacts are provided by residues Thr-394, Asn-396, Glu-415, Asp-418, 447–448, and 468–469; these read SS and GG.

The protein belongs to the gamma-glutamyltransferase family. In terms of assembly, this enzyme consists of two polypeptide chains, which are synthesized in precursor form from a single polypeptide. Cleaved by autocatalysis into a large and a small subunit.

It localises to the periplasm. It catalyses the reaction an N-terminal (5-L-glutamyl)-[peptide] + an alpha-amino acid = 5-L-glutamyl amino acid + an N-terminal L-alpha-aminoacyl-[peptide]. The enzyme catalyses glutathione + H2O = L-cysteinylglycine + L-glutamate. The catalysed reaction is an S-substituted glutathione + H2O = an S-substituted L-cysteinylglycine + L-glutamate. The protein operates within sulfur metabolism; glutathione metabolism. This chain is Glutathione hydrolase proenzyme (ggt), found in Pseudomonas sp. (strain A14).